We begin with the raw amino-acid sequence, 864 residues long: Eukaryotic translation initiation factor 3 subunit C (864 aa).

The segment at 1–77 (MSRFFARGGS…EESEDEERVT (77 aa)) is disordered. A compositionally biased stretch (acidic residues) spans 14-54 (SSSEDEQELYSDREEEEQFSDSEEESSEAESSEEESSDDEG). Residues 602 to 776 (FHMHINLELL…NAIVFRKGVE (175 aa)) form the PCI domain. Positions 815 to 864 (RDQGAGARGGRGAGRGGQARGGPRFPGGQQGRRPGGQQFSGGALGGAIKA) are disordered. A compositionally biased stretch (gly residues) spans 820-864 (GARGGRGAGRGGQARGGPRFPGGQQGRRPGGQQFSGGALGGAIKA).

The protein belongs to the eIF-3 subunit C family. In terms of assembly, component of the eukaryotic translation initiation factor 3 (eIF-3) complex.

Its subcellular location is the cytoplasm. Component of the eukaryotic translation initiation factor 3 (eIF-3) complex, which is involved in protein synthesis of a specialized repertoire of mRNAs and, together with other initiation factors, stimulates binding of mRNA and methionyl-tRNAi to the 40S ribosome. The eIF-3 complex specifically targets and initiates translation of a subset of mRNAs involved in cell proliferation. In Aspergillus terreus (strain NIH 2624 / FGSC A1156), this protein is Eukaryotic translation initiation factor 3 subunit C (nip1).